The primary structure comprises 418 residues: Imidazolonepropionase (418 aa).

H79 and H81 together coordinate Fe(3+). 2 residues coordinate Zn(2+): H79 and H81. 4-imidazolone-5-propanoate is bound by residues R88, Y151, and H184. Residue Y151 coordinates N-formimidoyl-L-glutamate. Fe(3+) is bound at residue H249. H249 provides a ligand contact to Zn(2+). Residue Q252 coordinates 4-imidazolone-5-propanoate. Residue D324 coordinates Fe(3+). Zn(2+) is bound at residue D324. N-formimidoyl-L-glutamate contacts are provided by N326 and G328. Residue T329 coordinates 4-imidazolone-5-propanoate.

This sequence belongs to the metallo-dependent hydrolases superfamily. HutI family. Zn(2+) is required as a cofactor. It depends on Fe(3+) as a cofactor.

It localises to the cytoplasm. The catalysed reaction is 4-imidazolone-5-propanoate + H2O = N-formimidoyl-L-glutamate. Its pathway is amino-acid degradation; L-histidine degradation into L-glutamate; N-formimidoyl-L-glutamate from L-histidine: step 3/3. In terms of biological role, catalyzes the hydrolytic cleavage of the carbon-nitrogen bond in imidazolone-5-propanoate to yield N-formimidoyl-L-glutamate. It is the third step in the universal histidine degradation pathway. In Colwellia psychrerythraea (strain 34H / ATCC BAA-681) (Vibrio psychroerythus), this protein is Imidazolonepropionase.